We begin with the raw amino-acid sequence, 73 residues long: Putative antimicrobial peptide clone 4 (73 aa).

A signal peptide spans 1–22 (MQMKYLIPIFFLVLIVADHCHA). A propeptide spanning residues 45 to 73 (DITSQIEQYRNLQKREAELEDILANLPVY) is cleaved from the precursor.

Belongs to the non-disulfide-bridged peptide (NDBP) superfamily. Short antimicrobial peptide (group 4) family. In terms of tissue distribution, expressed by the venom gland.

It localises to the secreted. Antimicrobial peptide. Has a high antibacterial activity against the Gram-positive bacterium S.aureus (MIC=5-17.30 uM), the methicillin-resistant S.aureus (MRSA) (MIC=17.30 uM), and E.faecalis (MIC=69.23 uM). Has antifungal activity against Candida spp. and one Cryptococcus neoformans strains with MICs values ranging from 6.25 to 100 uM. Also shows an inhibitory activity on C.albicans biofilms at high concentrations. Has a moderate hemolytic potency (18% at 20 uM). Also inhibits the growth of the five cancer cell lines tested. In the model of polymicrobial sepsis, it exhibits an antibiotic effect, reducing the levels of microorganisms in the infectious focus and the inflammatory responses in the lung and cecum of septic animals. In Tityus costatus (Brazilian scorpion), this protein is Putative antimicrobial peptide clone 4.